Reading from the N-terminus, the 154-residue chain is Low molecular weight protein-tyrosine-phosphatase PtpA (154 aa).

C8 (nucleophile) is an active-site residue. R14 is a catalytic residue. D120 serves as the catalytic Proton donor.

The protein belongs to the low molecular weight phosphotyrosine protein phosphatase family.

It catalyses the reaction O-phospho-L-tyrosyl-[protein] + H2O = L-tyrosyl-[protein] + phosphate. Functionally, dephosphorylates the phosphotyrosine-containing proteins. This is Low molecular weight protein-tyrosine-phosphatase PtpA (ptpA) from Staphylococcus haemolyticus (strain JCSC1435).